The sequence spans 63 residues: Large ribosomal subunit protein bL28c (63 aa).

The protein belongs to the bacterial ribosomal protein bL28 family.

The protein resides in the plastid. It is found in the chloroplast. In Pyropia yezoensis (Susabi-nori), this protein is Large ribosomal subunit protein bL28c.